A 295-amino-acid polypeptide reads, in one-letter code: Trimeric intracellular cation channel type A (295 aa).

Over 1–11 the chain is Lumenal; sequence MELLSALSLDD. The chain crosses the membrane as a helical span at residues 12–32; the sequence is LAVAFSKLPVFPLFDVAYYII. Residues 33 to 51 are Cytoplasmic-facing; that stretch reads SILYLKYEPGAVDLSKRSP. The helical transmembrane segment at 52–72 threads the bilayer; that stretch reads VASWLCAMLYCFGSYILADVL. Topologically, residues 73–84 are lumenal; the sequence is LGESPIHYFSNN. Gly-74 contributes to the Ca(2+) binding site. The helical transmembrane segment at 85-105 threads the bilayer; sequence ANILLASAVWYLTFFCPLNIF. At 106–144 the chain is on the cytoplasmic side; sequence YKIVSFLPLKLVLVGMKEVVRVRKIAMGIHHAHHHYHHG. 2 residues coordinate a 1,2-diacyl-sn-glycero-3-phospho-(1D-myo-inositol-4,5-bisphosphate): Lys-122 and Arg-126. A helical transmembrane segment spans residues 145–165; it reads WVIMVLIGWVKGSGVALMSNL. At 166–178 the chain is on the lumenal side; it reads EQLLRGVWKPETN. The chain crosses the membrane as a helical span at residues 179–199; the sequence is EILHMSFPTKASLYGAILFTL. The Cytoplasmic portion of the chain corresponds to 200-201; sequence QQ. Residues 202-222 form a helical membrane-spanning segment; the sequence is AHWLPISKAYLIFFFTLFMAI. Over 223-233 the chain is Lumenal; the sequence is CKIYMTATHSH. Residues 234 to 254 form a helical membrane-spanning segment; the sequence is GSPFAIFESGICCVLFGAANG. Residues 255–295 lie on the Cytoplasmic side of the membrane; sequence DHDDHGDHHHHHDDHDVSHSTVKSKEELNEGTRKRKTKKAE. Residues 259-286 are compositionally biased toward basic and acidic residues; sequence HGDHHHHHDDHDVSHSTVKSKEELNEGT. The interval 259–295 is disordered; sequence HGDHHHHHDDHDVSHSTVKSKEELNEGTRKRKTKKAE.

The protein belongs to the TMEM38 family. As to quaternary structure, homotrimer; conformation seems to be controled by binding to diacylglycerol (DAG).

It localises to the sarcoplasmic reticulum membrane. The protein localises to the nucleus membrane. It carries out the reaction K(+)(in) = K(+)(out). Channel activity is activated by a change of voltage within the sarcoplasmic reticulum lumen and blocked by luminal high Ca(2+) levels. Functionally, intracellular monovalent cation channel required for maintenance of rapid intracellular calcium release. Acts as a potassium counter-ion channel that functions in synchronization with calcium release from intracellular stores. Opened by a change of voltage within the sarcoplasmic reticulum lumen. The sequence is that of Trimeric intracellular cation channel type A (tmem38a) from Xenopus tropicalis (Western clawed frog).